The following is an 83-amino-acid chain: Kappa-theraphotoxin-Cg2a (83 aa).

An N-terminal signal peptide occupies residues 1 to 21 (MKGSAFAIILGLVVLCACSFA). A propeptide spanning residues 22–53 (EDEQDQFASPNELLRSMFLESRHELIPEVEGR) is cleaved from the precursor. 3 cysteine pairs are disulfide-bonded: cysteine 55–cysteine 69, cysteine 62–cysteine 74, and cysteine 68–cysteine 78. Position 82 is a leucine amide (leucine 82).

Belongs to the neurotoxin 30 (phrixotoxin) family. In terms of tissue distribution, expressed by the venom gland.

The protein localises to the secreted. Its function is as follows. Inhibits voltage-gated potassium channels of the subtype Kv4.1/KCND1 with high affinity and shows weak effects on Kv4.2/KCND2 and Kv2.1/KCNB1 subtypes. The toxin modifies the gating behavior of the channel and may interact with the S3-S4 extracellular loop. The polypeptide is Kappa-theraphotoxin-Cg2a (Chilobrachys guangxiensis (Chinese earth tiger tarantula)).